Reading from the N-terminus, the 294-residue chain is Protoheme IX farnesyltransferase 1 (294 aa).

A run of 9 helical transmembrane segments spans residues 8 to 28, 35 to 55, 82 to 102, 107 to 127, 132 to 152, 162 to 182, 208 to 228, 229 to 249, and 263 to 283; these read VTKP…FLLA, PWLM…GCAI, AMAA…LLIA, AAVF…SLYM, VYGT…GYCA, LILL…IAIF, IVLY…SGYT, GAAF…MALR, and QVFA…AVDY.

The protein belongs to the UbiA prenyltransferase family. Protoheme IX farnesyltransferase subfamily.

The protein localises to the cell inner membrane. The catalysed reaction is heme b + (2E,6E)-farnesyl diphosphate + H2O = Fe(II)-heme o + diphosphate. The protein operates within porphyrin-containing compound metabolism; heme O biosynthesis; heme O from protoheme: step 1/1. Its function is as follows. Converts heme B (protoheme IX) to heme O by substitution of the vinyl group on carbon 2 of heme B porphyrin ring with a hydroxyethyl farnesyl side group. This is Protoheme IX farnesyltransferase 1 from Pseudoalteromonas translucida (strain TAC 125).